The primary structure comprises 444 residues: 23S rRNA (uracil(1939)-C(5))-methyltransferase RlmD (444 aa).

A TRAM domain is found at R5–E67. [4Fe-4S] cluster contacts are provided by C80, C86, C89, and C168. S-adenosyl-L-methionine-binding residues include Q276, F305, N310, E326, D353, and D374. Catalysis depends on C400, which acts as the Nucleophile.

It belongs to the class I-like SAM-binding methyltransferase superfamily. RNA M5U methyltransferase family. RlmD subfamily.

It carries out the reaction uridine(1939) in 23S rRNA + S-adenosyl-L-methionine = 5-methyluridine(1939) in 23S rRNA + S-adenosyl-L-homocysteine + H(+). In terms of biological role, catalyzes the formation of 5-methyl-uridine at position 1939 (m5U1939) in 23S rRNA. This Xanthomonas oryzae pv. oryzae (strain KACC10331 / KXO85) protein is 23S rRNA (uracil(1939)-C(5))-methyltransferase RlmD.